Reading from the N-terminus, the 209-residue chain is Large ribosomal subunit protein uL3 (209 aa).

The segment at 133-152 is disordered; the sequence is THGNSLSHRVPGSIGQNQTP. N5-methylglutamine is present on Q150.

This sequence belongs to the universal ribosomal protein uL3 family. Part of the 50S ribosomal subunit. Forms a cluster with proteins L14 and L19. Post-translationally, methylated by PrmB.

In terms of biological role, one of the primary rRNA binding proteins, it binds directly near the 3'-end of the 23S rRNA, where it nucleates assembly of the 50S subunit. The chain is Large ribosomal subunit protein uL3 from Yersinia enterocolitica serotype O:8 / biotype 1B (strain NCTC 13174 / 8081).